The chain runs to 430 residues: GTPase Obg (430 aa).

One can recognise an Obg domain in the interval 1-158; that stretch reads MFVDQVKINV…IELQLELKVL (158 aa). Residues 122 to 143 are disordered; the sequence is GGRGNMRFASPRNPAPEISENG. The OBG-type G domain occupies 159-334; it reads ADVGLLGFPS…LVARTADVLE (176 aa). GTP-binding positions include 165–172, 190–194, 212–215, 282–285, and 315–317; these read GFPSVGKS, FTTLV, DIPG, TKMD, and SSI. S172 and T192 together coordinate Mg(2+). An OCT domain is found at 353–430; it reads YEFSSEKDFT…ILDFVFEFVE (78 aa).

It belongs to the TRAFAC class OBG-HflX-like GTPase superfamily. OBG GTPase family. As to quaternary structure, monomer. Requires Mg(2+) as cofactor.

Its subcellular location is the cytoplasm. In terms of biological role, an essential GTPase which binds GTP, GDP and possibly (p)ppGpp with moderate affinity, with high nucleotide exchange rates and a fairly low GTP hydrolysis rate. Plays a role in control of the cell cycle, stress response, ribosome biogenesis and in those bacteria that undergo differentiation, in morphogenesis control. The protein is GTPase Obg of Pediococcus pentosaceus (strain ATCC 25745 / CCUG 21536 / LMG 10740 / 183-1w).